We begin with the raw amino-acid sequence, 303 residues long: uncharacterized protein (303 aa).

The protein localises to the cytoplasm. This is an uncharacterized protein from Saccharomyces cerevisiae (strain ATCC 204508 / S288c) (Baker's yeast).